We begin with the raw amino-acid sequence, 630 residues long: Chaperone protein DnaK (630 aa).

A Phosphothreonine; by autocatalysis modification is found at threonine 198. Residues alanine 604–lysine 630 are disordered. Residues aspartate 617–lysine 630 are compositionally biased toward acidic residues.

It belongs to the heat shock protein 70 family.

Functionally, acts as a chaperone. The chain is Chaperone protein DnaK from Rhizorhabdus wittichii (strain DSM 6014 / CCUG 31198 / JCM 15750 / NBRC 105917 / EY 4224 / RW1) (Sphingomonas wittichii).